Consider the following 434-residue polypeptide: Asparagine--tRNA ligase (434 aa).

It belongs to the class-II aminoacyl-tRNA synthetase family.

The protein localises to the cytoplasm. The catalysed reaction is tRNA(Asn) + L-asparagine + ATP = L-asparaginyl-tRNA(Asn) + AMP + diphosphate + H(+). This Pyrococcus horikoshii (strain ATCC 700860 / DSM 12428 / JCM 9974 / NBRC 100139 / OT-3) protein is Asparagine--tRNA ligase.